A 92-amino-acid polypeptide reads, in one-letter code: Large ribosomal subunit protein bL28 (92 aa).

This sequence belongs to the bacterial ribosomal protein bL28 family.

The protein is Large ribosomal subunit protein bL28 of Borrelia hermsii (strain HS1 / DAH).